A 744-amino-acid chain; its full sequence is Eukaryotic translation initiation factor 3 subunit B (744 aa).

Residues 1–20 (MAPSFDHLPDPEEDEYDEEE) are disordered. Residues 11-20 (PEEDEYDEEE) are compositionally biased toward acidic residues. The region spanning 40–126 (TFVVIDGLPE…HTLRVNKLTD (87 aa)) is the RRM domain. WD repeat units lie at residues 193 to 232 (DRQHWTESFVQWSPQGTFLTSMHQQGVQLWGGPSWTRQKR), 234 to 290 (AHPF…PLRS), 307 to 348 (PVKR…LLDK), and 577 to 622 (ADHY…LREE). Over residues 699 to 714 (EREDAGLPRDPLEPLK) the composition is skewed to basic and acidic residues. The interval 699–722 (EREDAGLPRDPLEPLKSKMASGDE) is disordered.

This sequence belongs to the eIF-3 subunit B family. As to quaternary structure, component of the eukaryotic translation initiation factor 3 (eIF-3) complex.

The protein resides in the cytoplasm. Its function is as follows. RNA-binding component of the eukaryotic translation initiation factor 3 (eIF-3) complex, which is involved in protein synthesis of a specialized repertoire of mRNAs and, together with other initiation factors, stimulates binding of mRNA and methionyl-tRNAi to the 40S ribosome. The eIF-3 complex specifically targets and initiates translation of a subset of mRNAs involved in cell proliferation. In Sclerotinia sclerotiorum (strain ATCC 18683 / 1980 / Ss-1) (White mold), this protein is Eukaryotic translation initiation factor 3 subunit B (prt1).